The chain runs to 102 residues: Small ribosomal subunit protein uS10 (102 aa).

Belongs to the universal ribosomal protein uS10 family. In terms of assembly, part of the 30S ribosomal subunit.

Its function is as follows. Involved in the binding of tRNA to the ribosomes. This chain is Small ribosomal subunit protein uS10, found in Limosilactobacillus reuteri (strain DSM 20016) (Lactobacillus reuteri).